A 491-amino-acid chain; its full sequence is Protein nucleotidyltransferase YdiU (491 aa).

Positions 94, 96, 97, 117, 129, 130, 180, and 187 each coordinate ATP. The Proton acceptor role is filled by Asp-256. Mg(2+) is bound by residues Asn-257 and Asp-266. Asp-266 contributes to the ATP binding site.

This sequence belongs to the SELO family. Mg(2+) serves as cofactor. It depends on Mn(2+) as a cofactor.

It catalyses the reaction L-seryl-[protein] + ATP = 3-O-(5'-adenylyl)-L-seryl-[protein] + diphosphate. The catalysed reaction is L-threonyl-[protein] + ATP = 3-O-(5'-adenylyl)-L-threonyl-[protein] + diphosphate. It carries out the reaction L-tyrosyl-[protein] + ATP = O-(5'-adenylyl)-L-tyrosyl-[protein] + diphosphate. The enzyme catalyses L-histidyl-[protein] + UTP = N(tele)-(5'-uridylyl)-L-histidyl-[protein] + diphosphate. It catalyses the reaction L-seryl-[protein] + UTP = O-(5'-uridylyl)-L-seryl-[protein] + diphosphate. The catalysed reaction is L-tyrosyl-[protein] + UTP = O-(5'-uridylyl)-L-tyrosyl-[protein] + diphosphate. In terms of biological role, nucleotidyltransferase involved in the post-translational modification of proteins. It can catalyze the addition of adenosine monophosphate (AMP) or uridine monophosphate (UMP) to a protein, resulting in modifications known as AMPylation and UMPylation. The sequence is that of Protein nucleotidyltransferase YdiU from Clostridium botulinum (strain Alaska E43 / Type E3).